A 227-amino-acid chain; its full sequence is Enolase-phosphatase E1 (227 aa).

Belongs to the HAD-like hydrolase superfamily. MasA/MtnC family. Monomer. Mg(2+) serves as cofactor.

It catalyses the reaction 5-methylsulfanyl-2,3-dioxopentyl phosphate + H2O = 1,2-dihydroxy-5-(methylsulfanyl)pent-1-en-3-one + phosphate. It functions in the pathway amino-acid biosynthesis; L-methionine biosynthesis via salvage pathway; L-methionine from S-methyl-5-thio-alpha-D-ribose 1-phosphate: step 3/6. Its pathway is amino-acid biosynthesis; L-methionine biosynthesis via salvage pathway; L-methionine from S-methyl-5-thio-alpha-D-ribose 1-phosphate: step 4/6. Bifunctional enzyme that catalyzes the enolization of 2,3-diketo-5-methylthiopentyl-1-phosphate (DK-MTP-1-P) into the intermediate 2-hydroxy-3-keto-5-methylthiopentenyl-1-phosphate (HK-MTPenyl-1-P), which is then dephosphorylated to form the acireductone 1,2-dihydroxy-3-keto-5-methylthiopentene (DHK-MTPene). In Gluconobacter oxydans (strain 621H) (Gluconobacter suboxydans), this protein is Enolase-phosphatase E1.